The chain runs to 184 residues: MESESHWLWLFNTESGKLSVKLSDTDVFDTPYKPSQLVNIHFNEQMMDIEDATTFQIVSETLEAYPADKMPCAPQNAALNATAWCRFGRPQMPQSWHFQKSDISEWPLERRLCELNSGFDQGLFLILDTDDEFATCLLLSEGMQLSAIKSLRQYHVIKVTLNRLLPATVDLALSAQSNWGQQLA.

It belongs to the ZapC family. As to quaternary structure, interacts directly with FtsZ.

The protein resides in the cytoplasm. Contributes to the efficiency of the cell division process by stabilizing the polymeric form of the cell division protein FtsZ. Acts by promoting interactions between FtsZ protofilaments and suppressing the GTPase activity of FtsZ. This Idiomarina loihiensis (strain ATCC BAA-735 / DSM 15497 / L2-TR) protein is Cell division protein ZapC.